The primary structure comprises 256 residues: UPF0246 protein PG_1544 (256 aa).

Belongs to the UPF0246 family.

In Porphyromonas gingivalis (strain ATCC BAA-308 / W83), this protein is UPF0246 protein PG_1544.